A 129-amino-acid polypeptide reads, in one-letter code: MLKTLALISIGASCGAILRWFLGLMLNAIFLPIPLGTLAANLLGGYLIGVAVSMFNALSAVGPEFRLLIITGFLGGLTTFSTFTAEIGVLLQGQRIMTAVAAIVLHVCGSLIMMLLGMGTFALLRTCFR.

The next 3 membrane-spanning stretches (helical) occupy residues 20-40 (WFLG…TLAA), 67-87 (LLII…TAEI), and 96-116 (IMTA…MMLL). The Na(+) site is built by G75 and T78.

This sequence belongs to the fluoride channel Fluc/FEX (TC 1.A.43) family.

The protein localises to the cell inner membrane. It catalyses the reaction fluoride(in) = fluoride(out). Na(+) is not transported, but it plays an essential structural role and its presence is essential for fluoride channel function. In terms of biological role, fluoride-specific ion channel. Important for reducing fluoride concentration in the cell, thus reducing its toxicity. This chain is Fluoride-specific ion channel FluC, found in Desulfovibrio desulfuricans (strain ATCC 27774 / DSM 6949 / MB).